A 355-amino-acid chain; its full sequence is Peptide chain release factor 1 (355 aa).

Glutamine 233 bears the N5-methylglutamine mark.

This sequence belongs to the prokaryotic/mitochondrial release factor family. Methylated by PrmC. Methylation increases the termination efficiency of RF1.

It is found in the cytoplasm. Its function is as follows. Peptide chain release factor 1 directs the termination of translation in response to the peptide chain termination codons UAG and UAA. The sequence is that of Peptide chain release factor 1 from Bacillus anthracis.